The chain runs to 261 residues: MSALISLKALSVTFDDKKVLDSISLDLHKGKITTLIGPNGAGKSTLVKIIIGLLKPTSGQVQRQAKLTIGYVPQKLKLNDTLPLNVIRFLNLSGKYSQQETMEALRLVGAEHLYKSNMHKLSGGETQRVLLARALLQRPDLLVLDEPAQGVDIQGQIDLYDLIESIRHRFDCAVFMVSHDLHLVMAKTDEVICLQHHVCCSGAPEDITQHPSYIALFGSAARDSLAIYHHQHDHHHHDLAGQPVSGDATQCNHHHHGHHHD.

Residues 5–220 (ISLKALSVTF…PSYIALFGSA (216 aa)) form the ABC transporter domain. 37-44 (GPNGAGKS) provides a ligand contact to ATP. Residues 236-261 (HHDLAGQPVSGDATQCNHHHHGHHHD) are disordered. Residues 252–261 (NHHHHGHHHD) show a composition bias toward basic residues.

The protein belongs to the ABC transporter superfamily. Zinc importer (TC 3.A.1.15.5) family. As to quaternary structure, the complex is composed of two ATP-binding proteins (ZnuC), two transmembrane proteins (ZnuB) and a solute-binding protein (ZnuA).

Its subcellular location is the cell inner membrane. The catalysed reaction is Zn(2+)(out) + ATP(in) + H2O(in) = Zn(2+)(in) + ADP(in) + phosphate(in) + H(+)(in). Part of the ABC transporter complex ZnuABC involved in zinc import. Responsible for energy coupling to the transport system. This chain is Zinc import ATP-binding protein ZnuC, found in Vibrio vulnificus (strain CMCP6).